Reading from the N-terminus, the 193-residue chain is MSLATLTVLGFSLSADAFAAALGKGAGARRPDLLEAFRVGAYFGAFEAAAPLIGWALGLTFAARIAAFDHWVAFTLLAGVGGHMVIAALRAPKAETAEASKARQKRALSPLRLALAALATSIDATAVGIGLAVTEVNILMACALIGAITTVVAAGGVLLGRGAGPLLGRKAEVLGGLALIGIGLKILIEHLSA.

A run of 6 helical transmembrane segments spans residues 3–23 (LATL…AALG), 39–59 (VGAY…ALGL), 65–85 (IAAF…GHMV), 113–133 (LALA…GLAV), 138–158 (ILMA…GGVL), and 173–193 (VLGG…HLSA).

It belongs to the MntP (TC 9.B.29) family.

It is found in the cell inner membrane. Functionally, probably functions as a manganese efflux pump. The protein is Putative manganese efflux pump MntP of Rhodospirillum rubrum (strain ATCC 11170 / ATH 1.1.1 / DSM 467 / LMG 4362 / NCIMB 8255 / S1).